We begin with the raw amino-acid sequence, 225 residues long: UPF0758 protein BAMEG_4721 (225 aa).

An MPN domain is found at 103–225 (SIRSPEDCAT…FVSLKEKGHI (123 aa)). The Zn(2+) site is built by histidine 174, histidine 176, and aspartate 187. The JAMM motif signature appears at 174–187 (HNHPSGDPAPSRED).

The protein belongs to the UPF0758 family.

The protein is UPF0758 protein BAMEG_4721 of Bacillus anthracis (strain CDC 684 / NRRL 3495).